Here is a 945-residue protein sequence, read N- to C-terminus: Leucine--tRNA ligase (945 aa).

Positions 43-53 (PYPNGAVHIGH) match the 'HIGH' region motif. Positions 638-642 (KMSKS) match the 'KMSKS' region motif. K641 contacts ATP.

The protein belongs to the class-I aminoacyl-tRNA synthetase family.

Its subcellular location is the cytoplasm. The catalysed reaction is tRNA(Leu) + L-leucine + ATP = L-leucyl-tRNA(Leu) + AMP + diphosphate. This is Leucine--tRNA ligase from Pyrobaculum islandicum (strain DSM 4184 / JCM 9189 / GEO3).